A 571-amino-acid polypeptide reads, in one-letter code: Coenzyme A biosynthesis protein 3 (571 aa).

Disordered regions lie at residues 1-72 and 100-120; these read MTDE…YKND and INTS…PSLP. Positions 8–35 are enriched in polar residues; the sequence is SDQNMNGKQGVNLISSLPTTQVPVSILT. Position 42 is a phosphoserine (Ser42). The span at 43–59 shows a compositional bias: basic and acidic residues; it reads IHDESNFERSDSHEDQS. Residues 60-72 are compositionally biased toward polar residues; sequence KSNSNRRNIYKND. Residues Ser116, Ser121, and Ser124 each carry the phosphoserine modification. Disordered stretches follow at residues 140–171 and 209–244; these read ISNK…LQEQ and IFKE…SMEK. Positions 146–171 are enriched in low complexity; that stretch reads KQQQQQEQLQQNQQQEEQQKAQLQEQ. The residue at position 264 (Ser264) is a Phosphoserine. A disordered region spans residues 507–571; that stretch reads RDEETGDKEQ…EDEEDVKTEV (65 aa). A compositionally biased stretch (acidic residues) spans 516–571; the sequence is QEQEEQEGADNEDDDDEDDEEDEEDEEEEEALNETASDESNDEEDEEDEEDVKTEV.

It belongs to the HFCD (homooligomeric flavin containing Cys decarboxylase) superfamily. In terms of assembly, component of the phosphopantothenoylcysteine decarboxylase (PPCDC) complex, a heterotrimer composed of CAB3, HAL3 and VHS3.

It is found in the cytoplasm. In terms of biological role, component of the phosphopantothenoylcysteine decarboxylase (PPCDC) involved in the coenzyme A synthesis. The chain is Coenzyme A biosynthesis protein 3 (CAB3) from Saccharomyces cerevisiae (strain ATCC 204508 / S288c) (Baker's yeast).